A 319-amino-acid polypeptide reads, in one-letter code: ATP-dependent 6-phosphofructokinase (319 aa).

Gly-11 serves as a coordination point for ATP. Residue 21-25 (RAVVR) coordinates ADP. ATP-binding positions include 72–73 (RC) and 102–105 (GDGS). Asp-103 contributes to the Mg(2+) binding site. 125-127 (TID) lines the substrate pocket. Asp-127 acts as the Proton acceptor in catalysis. Residue Arg-154 participates in ADP binding. Residues Arg-162 and 169–171 (MGR) each bind substrate. ADP is bound by residues 185 to 187 (GAE), Arg-211, and 213 to 215 (KKH). Residues Glu-222, Arg-243, and 249–252 (HVQR) contribute to the substrate site.

Belongs to the phosphofructokinase type A (PFKA) family. ATP-dependent PFK group I subfamily. Prokaryotic clade 'B1' sub-subfamily. In terms of assembly, homotetramer. Mg(2+) is required as a cofactor.

It localises to the cytoplasm. It catalyses the reaction beta-D-fructose 6-phosphate + ATP = beta-D-fructose 1,6-bisphosphate + ADP + H(+). Its pathway is carbohydrate degradation; glycolysis; D-glyceraldehyde 3-phosphate and glycerone phosphate from D-glucose: step 3/4. With respect to regulation, allosterically activated by ADP and other diphosphonucleosides, and allosterically inhibited by phosphoenolpyruvate. In terms of biological role, catalyzes the phosphorylation of D-fructose 6-phosphate to fructose 1,6-bisphosphate by ATP, the first committing step of glycolysis. This is ATP-dependent 6-phosphofructokinase from Bacillus cereus (strain ATCC 14579 / DSM 31 / CCUG 7414 / JCM 2152 / NBRC 15305 / NCIMB 9373 / NCTC 2599 / NRRL B-3711).